A 283-amino-acid chain; its full sequence is uncharacterized protein (283 aa).

The next 5 membrane-spanning stretches (helical) occupy residues 8 to 28, 38 to 58, 73 to 93, 100 to 120, and 175 to 195; these read LILS…IGYV, GIHS…VKIA, FECL…YEIG, IIYG…ILSI, and AIAG…ICLT.

Belongs to the cation diffusion facilitator (CDF) transporter (TC 2.A.4) family.

It is found in the cell membrane. This is an uncharacterized protein from Methanocaldococcus jannaschii (strain ATCC 43067 / DSM 2661 / JAL-1 / JCM 10045 / NBRC 100440) (Methanococcus jannaschii).